We begin with the raw amino-acid sequence, 160 residues long: Endoribonuclease YbeY (160 aa).

The Zn(2+) site is built by His111, His115, and His121.

The protein belongs to the endoribonuclease YbeY family. The cofactor is Zn(2+).

The protein localises to the cytoplasm. Single strand-specific metallo-endoribonuclease involved in late-stage 70S ribosome quality control and in maturation of the 3' terminus of the 16S rRNA. This is Endoribonuclease YbeY from Stutzerimonas stutzeri (strain A1501) (Pseudomonas stutzeri).